The primary structure comprises 278 residues: Release factor glutamine methyltransferase (278 aa).

S-adenosyl-L-methionine is bound by residues 120 to 124, Asp143, and Asn184; that span reads GTGTG. 184–187 contacts substrate; that stretch reads NPPY.

The protein belongs to the protein N5-glutamine methyltransferase family. PrmC subfamily.

It catalyses the reaction L-glutaminyl-[peptide chain release factor] + S-adenosyl-L-methionine = N(5)-methyl-L-glutaminyl-[peptide chain release factor] + S-adenosyl-L-homocysteine + H(+). In terms of biological role, methylates the class 1 translation termination release factors RF1/PrfA and RF2/PrfB on the glutamine residue of the universally conserved GGQ motif. The polypeptide is Release factor glutamine methyltransferase (Deinococcus radiodurans (strain ATCC 13939 / DSM 20539 / JCM 16871 / CCUG 27074 / LMG 4051 / NBRC 15346 / NCIMB 9279 / VKM B-1422 / R1)).